The sequence spans 78 residues: Large ribosomal subunit protein bL28 (78 aa).

This sequence belongs to the bacterial ribosomal protein bL28 family.

The protein is Large ribosomal subunit protein bL28 of Microcystis aeruginosa (strain NIES-843 / IAM M-2473).